A 351-amino-acid chain; its full sequence is N-acetyl-gamma-glutamyl-phosphate reductase (351 aa).

Residue C154 is part of the active site.

Belongs to the NAGSA dehydrogenase family. Type 1 subfamily.

The protein localises to the cytoplasm. It carries out the reaction N-acetyl-L-glutamate 5-semialdehyde + phosphate + NADP(+) = N-acetyl-L-glutamyl 5-phosphate + NADPH + H(+). Its pathway is amino-acid biosynthesis; L-arginine biosynthesis; N(2)-acetyl-L-ornithine from L-glutamate: step 3/4. Functionally, catalyzes the NADPH-dependent reduction of N-acetyl-5-glutamyl phosphate to yield N-acetyl-L-glutamate 5-semialdehyde. This chain is N-acetyl-gamma-glutamyl-phosphate reductase, found in Prochlorococcus marinus (strain MIT 9515).